The following is a 323-amino-acid chain: Aquaporin-2 (323 aa).

3 helical membrane-spanning segments follow: residues 32-54 (FLAVFVLMVFTEGCSASAIFTHR), 74-96 (YVAGGVTGAFLNPAIAVAFSVLG), and 103-123 (CFCYMIAQYLGAFLASLAIYA). Positions 85-87 (NPA) match the NPA 1 motif. Residue Asn-143 is glycosylated (N-linked (GlcNAc...) asparagine). 2 consecutive transmembrane segments (helical) span residues 161–181 (GAFVDQVFGTALLIIVVLSMV) and 193–213 (FPIAIGLLIVVLDISLAYNAG). The NPA 2 motif lies at 217-219 (NPS). A helical transmembrane segment spans residues 243-263 (YTWFFVPVVGSHAGAIVGAVI). Asn-292 carries N-linked (GlcNAc...) asparagine glycosylation.

The protein belongs to the MIP/aquaporin (TC 1.A.8) family.

The protein localises to the cell membrane. The enzyme catalyses H2O(in) = H2O(out). It catalyses the reaction glycerol(in) = glycerol(out). Aquaglyceroporin that may modulate the water content and osmolytes during anhydrobiosis. The polypeptide is Aquaporin-2 (Milnesium tardigradum (Water bear)).